Reading from the N-terminus, the 24-residue chain is Positive regulator of RepFIC repA1 expression (24 aa).

The sequence is that of Positive regulator of RepFIC repA1 expression (repL) from Escherichia coli.